A 142-amino-acid chain; its full sequence is Putative pre-16S rRNA nuclease (142 aa).

Belongs to the YqgF nuclease family.

It is found in the cytoplasm. Functionally, could be a nuclease involved in processing of the 5'-end of pre-16S rRNA. This is Putative pre-16S rRNA nuclease from Staphylococcus epidermidis (strain ATCC 35984 / DSM 28319 / BCRC 17069 / CCUG 31568 / BM 3577 / RP62A).